A 685-amino-acid polypeptide reads, in one-letter code: Cilia- and flagella-associated protein 36 (685 aa).

The disordered stretch occupies residues 1-20; the sequence is MLRRFSKKNKNPEGGSDDAS. Residues 197-242 are a coiled coil; that stretch reads SEELEMMAQNSRIQREALEQEIRKEEILLQQALDEGARAQNQNQNQ. A compositionally biased stretch (low complexity) spans 287–310; sequence TGTMTSSTGVSVGTLTNTGVSSGT. A disordered region spans residues 287–573; that stretch reads TGTMTSSTGV…LRGNKYDGDV (287 aa). The span at 363-372 shows a compositional bias: basic and acidic residues; sequence EAEKSKRERP. The span at 410–434 shows a compositional bias: polar residues; that stretch reads GTTSKKSIATVTASPEMSSKTTQME. Basic and acidic residues-rich tracts occupy residues 439-456 and 508-557; these read GEGK…ERKY and HEPR…ESKP.

The protein belongs to the CFAP36 family. In terms of tissue distribution, expressed in amphid and phasmid ciliated neurons.

It localises to the cell projection. The protein localises to the cilium. It is found in the cytoplasm. The protein resides in the cytoskeleton. Its subcellular location is the cilium axoneme. The protein is Cilia- and flagella-associated protein 36 of Caenorhabditis elegans.